The chain runs to 851 residues: DNA mismatch repair protein MutS (851 aa).

An ATP-binding site is contributed by 602–609 (GPNMSGKS).

Belongs to the DNA mismatch repair MutS family.

Functionally, this protein is involved in the repair of mismatches in DNA. It is possible that it carries out the mismatch recognition step. This protein has a weak ATPase activity. The sequence is that of DNA mismatch repair protein MutS from Streptococcus pyogenes serotype M18 (strain MGAS8232).